Consider the following 145-residue polypeptide: D-aminoacyl-tRNA deacylase (145 aa).

A Gly-cisPro motif, important for rejection of L-amino acids motif is present at residues 137–138; that stretch reads GP.

The protein belongs to the DTD family. As to quaternary structure, homodimer.

The protein resides in the cytoplasm. It carries out the reaction glycyl-tRNA(Ala) + H2O = tRNA(Ala) + glycine + H(+). The catalysed reaction is a D-aminoacyl-tRNA + H2O = a tRNA + a D-alpha-amino acid + H(+). An aminoacyl-tRNA editing enzyme that deacylates mischarged D-aminoacyl-tRNAs. Also deacylates mischarged glycyl-tRNA(Ala), protecting cells against glycine mischarging by AlaRS. Acts via tRNA-based rather than protein-based catalysis; rejects L-amino acids rather than detecting D-amino acids in the active site. By recycling D-aminoacyl-tRNA to D-amino acids and free tRNA molecules, this enzyme counteracts the toxicity associated with the formation of D-aminoacyl-tRNA entities in vivo and helps enforce protein L-homochirality. This chain is D-aminoacyl-tRNA deacylase, found in Exiguobacterium sibiricum (strain DSM 17290 / CCUG 55495 / CIP 109462 / JCM 13490 / 255-15).